Reading from the N-terminus, the 527-residue chain is Sensory neuron membrane protein 1 (527 aa).

Over 1–10 (MQLQKPLKIG) the chain is Cytoplasmic. A helical membrane pass occupies residues 11 to 31 (LGMMGAGLFGIIFGWVLFPVI). Over 32–456 (LKSQLKKEMA…LKNQLFIPKR (425 aa)) the chain is Extracellular. Residues Asn-67 and Asn-229 are each glycosylated (N-linked (GlcNAc...) asparagine). 3 cysteine pairs are disulfide-bonded: Cys-268/Cys-333, Cys-297/Cys-352, and Cys-335/Cys-341. N-linked (GlcNAc...) asparagine glycosylation occurs at Asn-440. A helical transmembrane segment spans residues 457–477 (IVSVVKWLLAGVGFVGLVGSL). At 478-527 (VYQFKGKMINFALSPSSAQVTKVNPEINQQNQPKDISIIGESQNPPKVDM) the chain is on the cytoplasmic side.

The protein belongs to the CD36 family. As to expression, detected in both male and female antennal tissues. Expression is two to three fold higher in male compared to female antenna.

Its subcellular location is the cell membrane. In terms of biological role, plays an olfactory role that is not restricted to pheromone sensitivity. The sequence is that of Sensory neuron membrane protein 1 from Ostrinia furnacalis (Asian corn borer).